A 968-amino-acid chain; its full sequence is Polycystin-2 (968 aa).

Residues 1-11 (MVNSSRVQPQQ) show a composition bias toward polar residues. Disordered regions lie at residues 1 to 28 (MVNSSRVQPQQPGDAKRPPAPRAPDPGR) and 58 to 181 (RIRQ…LPLE). At 1–219 (MVNSSRVQPQ…STNREKYLKS (219 aa)) the chain is on the cytoplasmic side. Residues 62 to 83 (AAARDPPAGAAASPSPPLSSCS) are compositionally biased toward low complexity. Phosphoserine occurs at positions 76 and 80. Residues 95–107 (EAEEEEEEVEGEE) are compositionally biased toward acidic residues. A compositionally biased stretch (low complexity) spans 123–139 (RRSAASSAVSSVGARSR). Position 137 is an omega-N-methylarginine (Arg137). Residues 220–241 (VLRELVTYLLFLIVLCILTYGM) traverse the membrane as a helical segment. The Extracellular portion of the chain corresponds to 242–468 (MSSNVYYYTR…PLKLIRYVTT (227 aa)). Residues Asn299 and Asn305 are each glycosylated (N-linked (GlcNAc...) asparagine). An N-linked (GlcNAc...) (complex) asparagine glycan is attached at Asn328. Cys331 and Cys344 are joined by a disulfide. N-linked (GlcNAc...) asparagine glycans are attached at residues Asn362 and Asn375. The chain crosses the membrane as a helical span at residues 469–489 (FDFFLAACEIIFCFFIFYYVV). Over 490–505 (EEILEIRIHKLHYFRS) the chain is Cytoplasmic. The chain crosses the membrane as a helical span at residues 506-526 (FWNCLDVVIVVLSVVAIGINI). Residues 527 to 552 (YRTSNVEVLLQFLEDQNTFPNFEHLA) lie on the Extracellular side of the membrane. The helical transmembrane segment at 553–573 (YWQIQFNNIAAVTVFFVWIKL) threads the bilayer. Gln557 is a binding site for cholesterol. Residues 574–597 (FKFINFNRTMSQLSTTMSRCAKDL) are Cytoplasmic-facing. A helical transmembrane segment spans residues 598 to 619 (FGFAIMFFIIFLAYAQLAYLVF). Residues 620-631 (GTQVDDFSTFQE) are Extracellular-facing. The segment at residues 632 to 646 (CIFTQFRIILGDINF) is an intramembrane region (pore-forming). A Ca(2+)-binding site is contributed by Leu641. The Selectivity filter motif lies at 641-643 (LGD). Residues 647 to 654 (AEIEEANR) are Extracellular-facing. Residues 655-675 (VLGPIYFTTFVFFMFFILLNM) traverse the membrane as a helical segment. The Cytoplasmic portion of the chain corresponds to 676–968 (FLAIINDTYS…GGNGSSNVHV (293 aa)). The 36-residue stretch at 750–785 (HTDAEIEAIFTKYDQDGDQELTEHEHQQMRDDLEKE) folds into the EF-hand domain. Asp763, Asp765, Asp767, Glu769, and Glu774 together coordinate Ca(2+). The disordered stretch occupies residues 764–831 (QDGDQELTEH…HSSRRRGSIS (68 aa)). Residues 770–795 (LTEHEHQQMRDDLEKEREDLDLDHSS) show a composition bias toward basic and acidic residues. Positions 796-807 (LPRPMSSRSFPR) are enriched in low complexity. Ser801, Ser808, Ser812, and Ser829 each carry phosphoserine. Residues 803–822 (RSFPRSLDDSEEDDDEDSGH) are linker. Residues 810-821 (DDSEEDDDEDSG) are important for interaction with PACS1 and PACS2. Residues 833-872 (GVSYEEFQVLVRRVDRMEHSIGSIVSKIDAVIVKLEIMER) are a coiled coil. Residues 917-968 (ESDDAASQISHGLGTPVGLNGQPRPRSSRPSSSQSTEGMEGAGGNGSSNVHV) form a disordered region. The span at 938 to 951 (QPRPRSSRPSSSQS) shows a compositional bias: low complexity.

The protein belongs to the polycystin family. In terms of assembly, homotetramer. Component of the heterotetrameric polycystin channel complex with PKD1; the tetramer contains one PKD1 chain and three PKD2 chains. Isoform 1 interacts with PKD1 while isoform 3 does not. Interacts with PKD1L1; probably forms a Ca(2+) channel. Interacts with CD2AP. Interacts with HAX1. Interacts with NEK8. Part of a complex containing AKAP5, ADCY5, ADCY6 and PDE4C. Interacts (via C-terminus) with TRPV4 (via C-terminus). Interacts (via C-terminal acidic region) with PACS1 and PACS2; these interactions retain the protein in the endoplasmic reticulum and prevent trafficking to the cell membrane. Interacts with TMEM33. Form a heterotetramer with TRPC1 with a 2:2 stoichiometry; has distinct channel properties separate from PKD2 or TRPC1 homomers alone. Interacts with TMEM120A; TMEM120A inhibits PKD2 channel activity through the physical association of PKD2 with TMEM120A. Interacts (via N-terminus) with RYR2; regulates RYR2 channel activity. Post-translationally, phosphorylated. Phosphorylation is important for protein function; a mutant that lacks the N-terminal phosphorylation sites cannot complement a zebrafish pkd2-deficient mutant. PKD-mediated phosphorylation at the C-terminus regulates its function in the release of Ca(2+) stores from the endoplasmic reticulum. Phosphorylation at Ser-812 regulates PKD2 trafficking. Phosphorylation at Ser-76 is required for PKD2 trafficking to or retention at the lateral plasma membrane. Phosphorylation at Ser-801, Ser-812 and Ser-829 regulates PKD2 channel activity. In terms of processing, N-glycosylated. The four subunits in a tetramer probably differ in the extent of glycosylation; simultaneous glycosylation of all experimentally validated sites would probably create steric hindrance. Thus, glycosylation at Asn-305 is not compatible with glycosylation at Asn-328; only one of these two residues is glycosylated at a given time. Sumoylated by SUMO1; sumoylation regulates PKD2 membrane recycling and is necessary for intravascular pressure-induced arterial contractility. Detected in fetal and adult kidney. Detected at the thick ascending limb of the loop of Henle, at distal tubules, including the distal convoluted tubule and cortical collecting tubules, with weak staining of the collecting duct. Detected on placenta syncytiotrophoblasts (at protein level). Strongly expressed in ovary, fetal and adult kidney, testis, and small intestine. Not detected in peripheral leukocytes.

The protein resides in the cell projection. It is found in the cilium membrane. The protein localises to the endoplasmic reticulum membrane. It localises to the cell membrane. Its subcellular location is the basolateral cell membrane. The protein resides in the cytoplasmic vesicle membrane. It is found in the golgi apparatus. The protein localises to the vesicle. It localises to the secreted. Its subcellular location is the extracellular exosome. It catalyses the reaction K(+)(in) = K(+)(out). It carries out the reaction Na(+)(in) = Na(+)(out). The catalysed reaction is Ca(2+)(in) = Ca(2+)(out). With respect to regulation, channel activity is regulated by phosphorylation. Channel activity is regulated by intracellular Ca(2+). At the endoplasmic reticulum membrane (ER), TMEM33 enhances its channel activity. TMEM120A inhibits the channel activity of PKD2, and mediates mechanosensitivity of the PKD2-TMEM120A channel complex. PKD1/PKD2 complex on the plasma membrane is activated by PKD1 N-terminus. Forms a nonselective cation channel. Can function as a homotetrameric ion channel or can form heteromer with PKD1. Displays distinct function depending on its subcellular localization and regulation by its binding partners. In primary cilium functions as a cation channel, with a preference for monovalent cations over divalent cations that allows K(+), Na(+) and Ca(2+) influx, with low selectivity for Ca(2+). Involved in fluid-flow mechanosensation by the primary cilium in renal epithelium. In the endoplasmic reticulum, likely functions as a K(+) channel to facilitate Ca(2+) release. The heterotetrameric PKD1/PKD2 channel has higher Ca(2+) permeability than homomeric PKD2 channel and acts as a primarily Ca(2+)-permeable channel. Interacts with and acts as a regulator of a number of other channels, such as TRPV4, TRPC1, IP3R, RYR2, ultimately further affecting intracellular signaling, to modulate intracellular Ca(2+) signaling. Together with TRPV4, forms mechano- and thermosensitive channels in cilium. In cardiomyocytes, PKD2 modulates Ca(2+) release from stimulated RYR2 receptors through direct association. Also involved in left-right axis specification via its role in sensing nodal flow; forms a complex with PKD1L1 in cilia to facilitate flow detection in left-right patterning. Acts as a regulator of cilium length together with PKD1. Mediates systemic blood pressure and contributes to the myogenic response in cerebral arteries though vasoconstriction. The chain is Polycystin-2 from Homo sapiens (Human).